Consider the following 236-residue polypeptide: Purine nucleoside phosphorylase DeoD-type (236 aa).

H5 serves as a coordination point for a purine D-ribonucleoside. Phosphate is bound by residues G21, R25, R44, and 88 to 91 (RVGT). Residues 180–182 (DME) and 204–205 (SD) each bind a purine D-ribonucleoside. The Proton donor role is filled by D205.

The protein belongs to the PNP/UDP phosphorylase family. In terms of assembly, homohexamer; trimer of homodimers.

The enzyme catalyses a purine D-ribonucleoside + phosphate = a purine nucleobase + alpha-D-ribose 1-phosphate. The catalysed reaction is a purine 2'-deoxy-D-ribonucleoside + phosphate = a purine nucleobase + 2-deoxy-alpha-D-ribose 1-phosphate. Functionally, catalyzes the reversible phosphorolytic breakdown of the N-glycosidic bond in the beta-(deoxy)ribonucleoside molecules, with the formation of the corresponding free purine bases and pentose-1-phosphate. This Buchnera aphidicola subsp. Schizaphis graminum (strain Sg) protein is Purine nucleoside phosphorylase DeoD-type.